A 379-amino-acid polypeptide reads, in one-letter code: Homoserine O-succinyltransferase (379 aa).

The 310-residue stretch at 48–357 (NAVLICHALS…SAHGHDAFLM (310 aa)) folds into the AB hydrolase-1 domain. S154 (nucleophile) is an active-site residue. R224 serves as a coordination point for substrate. Residues D319 and H352 contribute to the active site. Substrate is bound at residue D353.

The protein belongs to the AB hydrolase superfamily. MetX family. Homodimer.

It is found in the cytoplasm. It carries out the reaction L-homoserine + succinyl-CoA = O-succinyl-L-homoserine + CoA. It participates in amino-acid biosynthesis; L-methionine biosynthesis via de novo pathway; O-succinyl-L-homoserine from L-homoserine: step 1/1. Functionally, transfers a succinyl group from succinyl-CoA to L-homoserine, forming succinyl-L-homoserine. The protein is Homoserine O-succinyltransferase of Neisseria meningitidis serogroup A / serotype 4A (strain DSM 15465 / Z2491).